The following is a 291-amino-acid chain: tRNA dimethylallyltransferase (291 aa).

9-16 (GTTASGKT) is a binding site for ATP. 11–16 (TASGKT) is a substrate binding site. The interaction with substrate tRNA stretch occupies residues 34 to 37 (DSLC).

It belongs to the IPP transferase family. Monomer. The cofactor is Mg(2+).

The catalysed reaction is adenosine(37) in tRNA + dimethylallyl diphosphate = N(6)-dimethylallyladenosine(37) in tRNA + diphosphate. In terms of biological role, catalyzes the transfer of a dimethylallyl group onto the adenine at position 37 in tRNAs that read codons beginning with uridine, leading to the formation of N6-(dimethylallyl)adenosine (i(6)A). The polypeptide is tRNA dimethylallyltransferase (Campylobacter lari (strain RM2100 / D67 / ATCC BAA-1060)).